The following is a 281-amino-acid chain: 4-deoxy-L-threo-5-hexosulose-uronate ketol-isomerase (281 aa).

Residues His-198, His-200, Glu-205, and His-248 each coordinate Zn(2+).

Belongs to the KduI family. Zn(2+) is required as a cofactor.

The enzyme catalyses 5-dehydro-4-deoxy-D-glucuronate = 3-deoxy-D-glycero-2,5-hexodiulosonate. It participates in glycan metabolism; pectin degradation; 2-dehydro-3-deoxy-D-gluconate from pectin: step 4/5. In terms of biological role, catalyzes the isomerization of 5-dehydro-4-deoxy-D-glucuronate to 3-deoxy-D-glycero-2,5-hexodiulosonate. This is 4-deoxy-L-threo-5-hexosulose-uronate ketol-isomerase from Lacticaseibacillus paracasei (strain ATCC 334 / BCRC 17002 / CCUG 31169 / CIP 107868 / KCTC 3260 / NRRL B-441) (Lactobacillus paracasei).